The chain runs to 119 residues: MAEAKTGAKATKSAAAGAADGASKEKGPKHTPSTPKPRGRRKTRIGYVVSDKMQKTIVVELEDRVRHPLYGKIIRTTKKVKVHDEHSAAGIGDRVSLMETRPLSATKRWRLVEILEKAK.

Over residues Met-1–Gly-21 the composition is skewed to low complexity. The segment at Met-1–Arg-44 is disordered.

This sequence belongs to the universal ribosomal protein uS17 family. In terms of assembly, part of the 30S ribosomal subunit.

One of the primary rRNA binding proteins, it binds specifically to the 5'-end of 16S ribosomal RNA. The protein is Small ribosomal subunit protein uS17 of Mycobacterium marinum (strain ATCC BAA-535 / M).